Reading from the N-terminus, the 635-residue chain is Biosynthetic arginine decarboxylase (635 aa).

Lys-100 bears the N6-(pyridoxal phosphate)lysine mark. 282–292 provides a ligand contact to substrate; the sequence is LDIGGGLGVDY.

Belongs to the Orn/Lys/Arg decarboxylase class-II family. SpeA subfamily. It depends on Mg(2+) as a cofactor. Pyridoxal 5'-phosphate is required as a cofactor.

It carries out the reaction L-arginine + H(+) = agmatine + CO2. It participates in amine and polyamine biosynthesis; agmatine biosynthesis; agmatine from L-arginine: step 1/1. Its function is as follows. Catalyzes the biosynthesis of agmatine from arginine. This is Biosynthetic arginine decarboxylase from Trichlorobacter lovleyi (strain ATCC BAA-1151 / DSM 17278 / SZ) (Geobacter lovleyi).